The primary structure comprises 516 residues: Putative GTP-binding protein 6 (516 aa).

Residues 18–39 show a composition bias toward low complexity; sequence GRGRSAPRAAAPSCPARALAAV. The interval 18 to 82 is disordered; sequence GRGRSAPRAA…PEDADENAEE (65 aa). Positions 57–67 are enriched in basic and acidic residues; that stretch reads LRADGGRSRTG. A compositionally biased stretch (acidic residues) spans 68–82; it reads DDEEEPEDADENAEE. In terms of domain architecture, Hflx-type G spans 295 to 459; that stretch reads PVISVVGYTN…ELDAAVLKAT (165 aa). Residues 301-308, 327-331, 349-352, 418-421, and 437-439 contribute to the GTP site; these read GYTNCGKT, FATLD, DTIG, NKVD, and SAL. Residues threonine 308 and threonine 329 each coordinate Mg(2+).

The protein belongs to the TRAFAC class OBG-HflX-like GTPase superfamily. HflX GTPase family. It depends on Mg(2+) as a cofactor. As to expression, ubiquitously expressed.

The sequence is that of Putative GTP-binding protein 6 (GTPBP6) from Homo sapiens (Human).